The primary structure comprises 424 residues: Proline--tRNA ligase (424 aa).

The protein belongs to the class-II aminoacyl-tRNA synthetase family. ProS type 2 subfamily. Homodimer.

The protein localises to the cytoplasm. It catalyses the reaction tRNA(Pro) + L-proline + ATP = L-prolyl-tRNA(Pro) + AMP + diphosphate. In terms of biological role, catalyzes the attachment of proline to tRNA(Pro) in a two-step reaction: proline is first activated by ATP to form Pro-AMP and then transferred to the acceptor end of tRNA(Pro). This chain is Proline--tRNA ligase, found in Ehrlichia canis (strain Jake).